The primary structure comprises 245 residues: Biosynthetic peptidoglycan transglycosylase (245 aa).

Residues 29–49 (LLVAFLILSLVLVATVSVINP) traverse the membrane as a helical segment.

The protein belongs to the glycosyltransferase 51 family.

It localises to the cell inner membrane. It carries out the reaction [GlcNAc-(1-&gt;4)-Mur2Ac(oyl-L-Ala-gamma-D-Glu-L-Lys-D-Ala-D-Ala)](n)-di-trans,octa-cis-undecaprenyl diphosphate + beta-D-GlcNAc-(1-&gt;4)-Mur2Ac(oyl-L-Ala-gamma-D-Glu-L-Lys-D-Ala-D-Ala)-di-trans,octa-cis-undecaprenyl diphosphate = [GlcNAc-(1-&gt;4)-Mur2Ac(oyl-L-Ala-gamma-D-Glu-L-Lys-D-Ala-D-Ala)](n+1)-di-trans,octa-cis-undecaprenyl diphosphate + di-trans,octa-cis-undecaprenyl diphosphate + H(+). Its pathway is cell wall biogenesis; peptidoglycan biosynthesis. Peptidoglycan polymerase that catalyzes glycan chain elongation from lipid-linked precursors. The polypeptide is Biosynthetic peptidoglycan transglycosylase (Shewanella amazonensis (strain ATCC BAA-1098 / SB2B)).